The sequence spans 370 residues: Phosphoserine aminotransferase (370 aa).

An N-acetylmethionine modification is found at methionine 1. O-phospho-L-serine is bound by residues histidine 44 and arginine 45. Lysine 51 carries the post-translational modification N6-acetyllysine. Pyridoxal 5'-phosphate is bound by residues glycine 79, cysteine 80, and tryptophan 107. Lysine 127 carries the N6-acetyllysine modification. Threonine 156, aspartate 176, and glutamine 199 together coordinate pyridoxal 5'-phosphate. Lysine 200 is subject to N6-(pyridoxal phosphate)lysine. Asparagine 241 and threonine 242 together coordinate pyridoxal 5'-phosphate. N6-acetyllysine is present on residues lysine 269, lysine 318, and lysine 323. Serine 331 carries the post-translational modification Phosphoserine. An N6-acetyllysine modification is found at lysine 333. The O-phospho-L-serine site is built by histidine 335, arginine 336, and arginine 342.

This sequence belongs to the class-V pyridoxal-phosphate-dependent aminotransferase family. SerC subfamily. Homodimer. Pyridoxal 5'-phosphate serves as cofactor.

The enzyme catalyses O-phospho-L-serine + 2-oxoglutarate = 3-phosphooxypyruvate + L-glutamate. It participates in amino-acid biosynthesis; L-serine biosynthesis; L-serine from 3-phospho-D-glycerate: step 2/3. Its function is as follows. Involved in L-serine biosynthesis via the phosphorylated pathway, a three-step pathway converting the glycolytic intermediate 3-phospho-D-glycerate into L-serine. Catalyzes the second step, that is the pyridoxal 5'-phosphate-dependent transamination of 3-phosphohydroxypyruvate and L-glutamate to O-phosphoserine (OPS) and alpha-ketoglutarate. In Oryctolagus cuniculus (Rabbit), this protein is Phosphoserine aminotransferase (PSAT1).